The primary structure comprises 198 residues: Superoxide dismutase [Fe] (198 aa).

Residues His27, His74, Asp157, and His161 each contribute to the Fe(3+) site.

Belongs to the iron/manganese superoxide dismutase family. In terms of assembly, homodimer. Fe(3+) serves as cofactor.

It carries out the reaction 2 superoxide + 2 H(+) = H2O2 + O2. Functionally, destroys superoxide anion radicals which are normally produced within the cells and which are toxic to biological systems. The sequence is that of Superoxide dismutase [Fe] (sodB) from Pseudomonas putida (Arthrobacter siderocapsulatus).